The primary structure comprises 454 residues: NADP-specific glutamate dehydrogenase (454 aa).

Serine 2 bears the N-acetylserine mark. Residue lysine 114 is part of the active site.

It belongs to the Glu/Leu/Phe/Val dehydrogenases family. Homohexamer.

The catalysed reaction is L-glutamate + NADP(+) + H2O = 2-oxoglutarate + NH4(+) + NADPH + H(+). The protein is NADP-specific glutamate dehydrogenase (GDH) of Neurospora intermedia.